A 258-amino-acid chain; its full sequence is GPI alpha-1,4-mannosyltransferase I, stabilizing subunit (258 aa).

A signal peptide spans 1 to 21 (MAARVAAVRAAAWLLLGAATG). Topologically, residues 22–230 (LTRGPAAAFT…PVGLTVHTSL (209 aa)) are lumenal. N-linked (GlcNAc...) asparagine glycosylation is present at asparagine 103. The helical transmembrane segment at 231–251 (VCSVTLLITILCSTLILVAVF) threads the bilayer. At 252-258 (KYGHFSL) the chain is on the cytoplasmic side.

Belongs to the PIGX family. In terms of assembly, part of the glycosylphosphatidylinositol-mannosyltransferase I complex that is composed of PIGM and PIGX. Interacts with PIGM; PIGX stabilizes PIGM.

It is found in the endoplasmic reticulum membrane. The protein operates within glycolipid biosynthesis; glycosylphosphatidylinositol-anchor biosynthesis. In terms of biological role, stabilizing subunit of the glycosylphosphatidylinositol-mannosyltransferase I complex which catalyzes the transfer of the first mannose, via an alpha-1,4 bond from a dolichol-phosphate-mannose (Dol-P-Man) to the glucosaminyl acyl phosphatidylinositol (GlcN-(acyl)PI) intermediate to generate alpha-D-Man-(1-&gt;4)-alpha-D-GlcN-(1-&gt;6)-(1-radyl,2-acyl-sn-glycero-3-phospho)-2-acyl-inositol and participates in the sixth step of the glycosylphosphatidylinositol-anchor biosynthesis. Probably acts by stabilizing the mannosyltransferase PIGM. The sequence is that of GPI alpha-1,4-mannosyltransferase I, stabilizing subunit from Homo sapiens (Human).